The primary structure comprises 85 residues: Photosystem I reaction center subunit PsaK (85 aa).

The next 2 helical transmembrane spans lie at 12 to 34 and 54 to 76; these read TVTW…IAVG and GGMG…IGAI.

Belongs to the PsaG/PsaK family.

It is found in the cellular thylakoid membrane. The polypeptide is Photosystem I reaction center subunit PsaK (Parasynechococcus marenigrum (strain WH8102)).